The following is a 320-amino-acid chain: Glutaconate CoA-transferase subunit A (320 aa).

Belongs to the 3-oxoacid CoA-transferase subunit A family. In terms of assembly, heterooctamer of four A and four B subunits.

It is found in the cytoplasm. It catalyses the reaction trans-glutaconate + acetyl-CoA = (2E)-glutaconyl-CoA + acetate. It functions in the pathway amino-acid degradation; L-glutamate degradation via hydroxyglutarate pathway; crotonoyl-CoA from L-glutamate: step 3/5. Its function is as follows. Catalyzes the transfer of the CoA moiety from acetyl-CoA to (R)-2-hydroxyglutarate and related compounds like glutaconate. The chain is Glutaconate CoA-transferase subunit A (gctA) from Acidaminococcus fermentans (strain ATCC 25085 / DSM 20731 / CCUG 9996 / CIP 106432 / VR4).